The primary structure comprises 294 residues: tRNA pseudouridine synthase B (294 aa).

Aspartate 38 serves as the catalytic Nucleophile.

It belongs to the pseudouridine synthase TruB family. Type 1 subfamily.

The enzyme catalyses uridine(55) in tRNA = pseudouridine(55) in tRNA. In terms of biological role, responsible for synthesis of pseudouridine from uracil-55 in the psi GC loop of transfer RNAs. The polypeptide is tRNA pseudouridine synthase B (Clostridium perfringens (strain ATCC 13124 / DSM 756 / JCM 1290 / NCIMB 6125 / NCTC 8237 / Type A)).